The chain runs to 369 residues: Melanoma-associated antigen 10 (369 aa).

The interval 1–131 is disordered; that stretch reads MPRAPKRQRC…VLPDSESLPR (131 aa). A compositionally biased stretch (low complexity) spans 39 to 62; the sequence is SSSTSTSSSFPSSFPSSSSSSSSS. Polar residues-rich tracts occupy residues 85–96 and 107–121; these read QSAQIACSSPSV and EGSS…STLQ. The MAGE domain maps to 134–333; it reads IDEKVTDLVQ…RSFPLWYEEA (200 aa). Residues 340–369 are disordered; sequence RAQDRIATTDDTTAMASASSSATGSFSYPE. Residues 348–369 show a composition bias toward low complexity; it reads TDDTTAMASASSSATGSFSYPE.

Expressed in many tumors of several types, such as melanoma, head and neck squamous cell carcinoma, lung carcinoma and breast carcinoma, but not in normal tissues except for spermatogonia, spermatocytes and placenta.

The protein localises to the nucleus. Not known, though may play a role in embryonal development and tumor transformation or aspects of tumor progression. The chain is Melanoma-associated antigen 10 (MAGEA10) from Homo sapiens (Human).